A 243-amino-acid chain; its full sequence is Ubiquinone/menaquinone biosynthesis C-methyltransferase UbiE (243 aa).

S-adenosyl-L-methionine contacts are provided by residues Thr69, Asp90, and 116 to 117 (DA).

The protein belongs to the class I-like SAM-binding methyltransferase superfamily. MenG/UbiE family.

The catalysed reaction is a 2-demethylmenaquinol + S-adenosyl-L-methionine = a menaquinol + S-adenosyl-L-homocysteine + H(+). It catalyses the reaction a 2-methoxy-6-(all-trans-polyprenyl)benzene-1,4-diol + S-adenosyl-L-methionine = a 5-methoxy-2-methyl-3-(all-trans-polyprenyl)benzene-1,4-diol + S-adenosyl-L-homocysteine + H(+). The protein operates within quinol/quinone metabolism; menaquinone biosynthesis; menaquinol from 1,4-dihydroxy-2-naphthoate: step 2/2. It functions in the pathway cofactor biosynthesis; ubiquinone biosynthesis. Its function is as follows. Methyltransferase required for the conversion of demethylmenaquinol (DMKH2) to menaquinol (MKH2) and the conversion of 2-polyprenyl-6-methoxy-1,4-benzoquinol (DDMQH2) to 2-polyprenyl-3-methyl-6-methoxy-1,4-benzoquinol (DMQH2). The sequence is that of Ubiquinone/menaquinone biosynthesis C-methyltransferase UbiE from Cupriavidus pinatubonensis (strain JMP 134 / LMG 1197) (Cupriavidus necator (strain JMP 134)).